The chain runs to 384 residues: MKFIDEAKIEVAAGKGGNGATSFRREKFVPRGGPDGGDGGKGGSVWAEADENTNTLVEYRFVKRYQAKNGEKGHGSDRYGAGADDIVLKMPVGTLIRDLDTDEIVADLTYHGQRVCLAKGGKGGLGNIHFKSSVNRAPKQSTPGEEGETRSLQLELKVLADVGLLGMPNAGKSTLITAVSAARPKIANYPFTTLHPNLGVVRIDENHSFVMADIPGLIEGAAEGAGLGHRFLKHLSRTGLLLHVVDLAPFDETVNPAEEALAIINELRKYDEELYGKPRWLVLNKLDMLDEEEARARTAAFLEAVGWDYPEPDDRFQFDMETPRLFQISALTHQGTQELVHQINQYLAEKKRIEAEKAEAEKAAANVEIIEQQPKTDTGVFKPE.

The 159-residue stretch at 1–159 (MKFIDEAKIE…RSLQLELKVL (159 aa)) folds into the Obg domain. Disordered regions lie at residues 20–46 (ATSF…GSVW) and 129–149 (HFKS…EGET). A compositionally biased stretch (gly residues) spans 33 to 43 (GPDGGDGGKGG). The span at 130–143 (FKSSVNRAPKQSTP) shows a compositional bias: polar residues. Residues 160–348 (ADVGLLGMPN…LVHQINQYLA (189 aa)) enclose the OBG-type G domain. GTP contacts are provided by residues 166-173 (GMPNAGKS), 191-195 (FTTLH), 213-216 (DIPG), 284-287 (NKLD), and 329-331 (SAL). Positions 173 and 193 each coordinate Mg(2+).

It belongs to the TRAFAC class OBG-HflX-like GTPase superfamily. OBG GTPase family. In terms of assembly, monomer. It depends on Mg(2+) as a cofactor.

The protein resides in the cytoplasm. Its function is as follows. An essential GTPase which binds GTP, GDP and possibly (p)ppGpp with moderate affinity, with high nucleotide exchange rates and a fairly low GTP hydrolysis rate; the half-life of the GTP-bound state is about 50 minutes. Plays a role in control of the cell cycle, stress response, ribosome biogenesis and in those bacteria that undergo differentiation, in morphogenesis control. The chain is GTPase Obg from Neisseria gonorrhoeae (strain ATCC 700825 / FA 1090).